Reading from the N-terminus, the 277-residue chain is MSERDKTLEHAPLGRESAYPEHYDAGLLFPIPRQANRAPLGLDDAALPFEGEDEWHAFELSWLDAKGKPIVAVARFRLPADSPSLIESKSWKLYLNSFNQTRFDRREAVIDTLERDLAQAAGASVAVALFGVEDDALMPRALPGECLDDLDVSIEYYTPTPGLLEVGEEIVEETLHSHLLKSNCPVTGQPDWGSVLIRYRGPRLERDALLKYLISYRQHQDFHEHCVEHLFVDLMARARPERLLVMARYVRRGGLDISPWRGTPGERPPTPLRLARQ.

Residue 86-88 coordinates substrate; it reads IES. 88–89 contributes to the NADPH binding site; it reads SK. Catalysis depends on cysteine 184, which acts as the Thioimide intermediate. Catalysis depends on aspartate 191, which acts as the Proton donor. 223 to 224 provides a ligand contact to substrate; it reads HE. 252–253 is an NADPH binding site; the sequence is RG.

Belongs to the GTP cyclohydrolase I family. QueF type 2 subfamily. As to quaternary structure, homodimer.

The protein localises to the cytoplasm. It carries out the reaction 7-aminomethyl-7-carbaguanine + 2 NADP(+) = 7-cyano-7-deazaguanine + 2 NADPH + 3 H(+). The protein operates within tRNA modification; tRNA-queuosine biosynthesis. In terms of biological role, catalyzes the NADPH-dependent reduction of 7-cyano-7-deazaguanine (preQ0) to 7-aminomethyl-7-deazaguanine (preQ1). This chain is NADPH-dependent 7-cyano-7-deazaguanine reductase, found in Chromohalobacter salexigens (strain ATCC BAA-138 / DSM 3043 / CIP 106854 / NCIMB 13768 / 1H11).